A 413-amino-acid chain; its full sequence is Glucose-1-phosphate adenylyltransferase (413 aa).

Alpha-D-glucose 1-phosphate-binding positions include Tyr-102, Gly-167, 182-183, and Ser-200; that span reads EK.

It belongs to the bacterial/plant glucose-1-phosphate adenylyltransferase family. Homotetramer.

The enzyme catalyses alpha-D-glucose 1-phosphate + ATP + H(+) = ADP-alpha-D-glucose + diphosphate. It functions in the pathway glycan biosynthesis; glycogen biosynthesis. Its function is as follows. Involved in the biosynthesis of ADP-glucose, a building block required for the elongation reactions to produce glycogen. Catalyzes the reaction between ATP and alpha-D-glucose 1-phosphate (G1P) to produce pyrophosphate and ADP-Glc. This chain is Glucose-1-phosphate adenylyltransferase, found in Deinococcus deserti (strain DSM 17065 / CIP 109153 / LMG 22923 / VCD115).